Consider the following 321-residue polypeptide: Epiphycan (321 aa).

A signal peptide spans 1–19 (MKALARLIVGLLILDAAVT). T60 carries an O-linked (GalNAc...) threonine glycan. Residue S64 is glycosylated (O-linked (Xyl...) (dermatan sulfate) serine). A disordered region spans residues 64-100 (SGNRELLTPPPQPEEAEEEEEEESTPRLIDGSSPQEP). Over residues 77 to 86 (EEAEEEEEEE) the composition is skewed to acidic residues. S95 carries O-linked (GalNAc...) serine glycosylation. The region spanning 105–142 (VLGPQTNEDFPTCLLCTCISTTVYCDDHELDAIPPLPK) is the LRRNT domain. A disulfide bond links C117 and C129. LRR repeat units lie at residues 143 to 164 (NTAY…DFAS), 167 to 188 (DLRR…AFRK), 191 to 212 (QLRE…PTTL), 237 to 257 (DLHH…PLPE), and 258 to 279 (NLRA…TFCN). Cysteines 278 and 311 form a disulfide. An N-linked (GlcNAc...) asparagine glycan is attached at N282. An LRR 6 repeat occupies 289-309 (ALEDIRLDGNPINLSKTPQAY).

This sequence belongs to the small leucine-rich proteoglycan (SLRP) family. SLRP class III subfamily. A long and a short form present in approximately equimolar amounts may arise by proteolysis or cleavage by exopeptidases. Post-translationally, the O-linked polysaccharides on Thr-60 and Ser-95 are probably the mucin type linked to GalNAc. There is one glycosaminoglycan chain, known to be dermatan sulfate, and it is probably the O-glycosylation at Ser-64. In terms of tissue distribution, preferentially expressed in the zone of flattened chondrocytes of the developing limb cartilage.

The protein localises to the secreted. It localises to the extracellular space. The protein resides in the extracellular matrix. Functionally, may have a role in bone formation and also in establishing the ordered structure of cartilage through matrix organization. This is Epiphycan (EPYC) from Bos taurus (Bovine).